Here is a 145-residue protein sequence, read N- to C-terminus: Large-conductance mechanosensitive channel (145 aa).

A run of 3 helical transmembrane segments spans residues 14–34 (VMDL…VKSL), 38–58 (LIMP…YFLP), and 81–101 (GSFL…FLMV).

This sequence belongs to the MscL family. As to quaternary structure, homopentamer.

The protein resides in the cell inner membrane. Its function is as follows. Channel that opens in response to stretch forces in the membrane lipid bilayer. May participate in the regulation of osmotic pressure changes within the cell. The sequence is that of Large-conductance mechanosensitive channel from Rhizobium etli (strain CIAT 652).